Reading from the N-terminus, the 65-residue chain is Large ribosomal subunit protein bL35 (65 aa).

The protein belongs to the bacterial ribosomal protein bL35 family.

This is Large ribosomal subunit protein bL35 from Prochlorococcus marinus (strain NATL1A).